The following is a 228-amino-acid chain: Apoptosis regulator R1 (228 aa).

Residues 1 to 21 (LNPKKKENNGVKNGDREKQHE) are compositionally biased toward basic and acidic residues. The interval 1–29 (LNPKKKENNGVKNGDREKQHETGNTIFRG) is disordered. A BH1 motif is present at residues 120 to 139 (SLFQGGVNWGRIVAFFVFGA). A BH2 motif is present at residues 171-186 (DWIQSNGGWNGFLTLY). The chain crosses the membrane as a helical span at residues 207–227 (TVLTGAVALGALMTVGALFAS).

Belongs to the Bcl-2 family.

Its subcellular location is the membrane. Could be the homolog of mammalian Bcl-W. This is Apoptosis regulator R1 from Xenopus laevis (African clawed frog).